We begin with the raw amino-acid sequence, 1168 residues long: MSTTEPSPENDRDPQPTTISTPTSTNAKLLKKIPAIPFRHSDKEGEDEQAKTDEVTTELAGEGPMSHDSPEILAPSSLGLNHIRTKSSPAPSPLRFSSATPLISPGQDDKDVAKEKPRVGVVDARADARARWPIPPHQPDQGKKVQWSQSKSQRVPANSNPGVESTHVGLAKETQSPRFQAILRVTSGRKKKAHDIKSFSHELNSKGVRPFPVWRSRAVGHMEEIMAAIRTKFDKQKEDVDADLGVFAGYLVTTLESTPESNKELRVGLEDLLVEARQCATMPASEFWLKCEGIVQKLDDKRQELPMGGLKQAHNRLLFILTRCNRLVQFRKESGYVEEHILGMHQLSDLGVYPEQMVEISRQQDLLREKEIQKINEKQNLAGKQDDQNSNSGADGVEVNTARSTDSTSSNFRMSSWKKLPSAAEKNRSLNNTPKAKGESKIQPKVYGDENAENLHSPSGQPASADRSALWGFWADHQCVTYDNSMICRICEVEIPVVHVEEHSRICTIADRCDLKGINVNLRLERVAESLEKILESWTPKSSVTPRAVADSARLSNSSRQEDLDEISQRCSDDMLDCVPRSQNTFSLDELNILNEMSMTNGTKDSSAGSLTPPSPATPRNSQVDLLLSGRKTISELENYQQINKLLDIARSVANVNVCGYSSLDFMIEQLDELKYVIQDRKADALVVETFGRRIEKLLQEKYIELCGLIDDEKVDSSNAMPDEESSADEDTVRSLRASPLNPRAKDRTSIEDFEIIKPISRGAFGRVFLAKKRATGDLFAIKVLKKADMIRKNAVESILAERNILISVRNPFVVRFFYSFTCRENLYLVMEYLNGGDLFSLLRNLGCLDEDMARIYIAEVVLALEYLHSVNIIHRDLKPDNLLINQDGHIKLTDFGLSKVGLINSTDDLSGESSLGNSGFFAEDGSKAQHSQGKDSRKKHAVVGTPDYLAPEILLGMGHGKTADWWSVGVILFEVLVGIPPFNAETPQQIFENIINRDIPWPNVPEEISYEAHDLINKLLTENPVQRLGATGAGEVKQHHFFKDINWDTLARQKAMFVPSAEPQDTSYFMSRYIWNPEDENVHGGSDFDDLTDTCSSSSFNTQEEDGDECGSLAEFGNGPNLAVKYSFSNFSFKNLSQLASINYDLVLKNAKESVEASNQSAPRPET.

Disordered stretches follow at residues 1–165 (MSTT…GVES) and 377–444 (EKQN…KIQP). Over residues 16–25 (PTTISTPTST) the composition is skewed to low complexity. 2 stretches are compositionally biased toward basic and acidic residues: residues 39 to 54 (RHSD…KTDE) and 107 to 130 (QDDK…DARA). Polar residues-rich tracts occupy residues 146–163 (QWSQ…NPGV) and 401–414 (TARS…NFRM). The C2H2-type; atypical zinc finger occupies 488–507 (CRICEVEIPVVHVEEHSRIC). Disordered stretches follow at residues 546–566 (PRAV…DLDE), 602–622 (GTKD…PRNS), and 717–744 (SSNA…LNPR). One can recognise a Protein kinase domain in the interval 754-1043 (FEIIKPISRG…AGEVKQHHFF (290 aa)). Residues 760-768 (ISRGAFGRV) and K783 contribute to the ATP site. Catalysis depends on D877, which acts as the Proton acceptor. One can recognise an AGC-kinase C-terminal domain in the interval 1044-1144 (KDINWDTLAR…KNLSQLASIN (101 aa)).

This sequence belongs to the protein kinase superfamily. AGC Ser/Thr protein kinase family. Highly expressed in roots, elongating root hair cells and pollen grains.

It carries out the reaction L-seryl-[protein] + ATP = O-phospho-L-seryl-[protein] + ADP + H(+). The catalysed reaction is L-threonyl-[protein] + ATP = O-phospho-L-threonyl-[protein] + ADP + H(+). In terms of biological role, modulates root tip growth. May play a common role in the tip growth of plant cells. This is Probable serine/threonine protein kinase IRE from Arabidopsis thaliana (Mouse-ear cress).